The primary structure comprises 1317 residues: MSVKIHIDRGGTFTDAIATFADESRPPIVIKLLSEDPSNYKDASIEAVRRILEIVQGKSIPRTEKLDTSCINHLRCGTTVATNALLERKGERCAFITTKGFKDGLLIGNQSRPNIFELGIRRPEVLYSKVIEVDERVTLEDYVEDPMKVKTTIDGSDPSLVVGRSGEVVRIMKKVDCDALRKDLQALYDEGFTSIAVCLAHSFTFPDHELLVGKIAEEVGFSNISLSTKLMPMIKYVPRATSATADAYLSPVVRRYLAGFQSGFLHGLKTKDNSKGVRCEFMQSDGGLVDVNKFSGLHAILSGPAGGVVGFALTSYDEDVKIPVIGFDMGGTSTDVSRYGGSYEHVFETTTAGVTIQSPQLDINTVAAGGGSRLFWKNGLFVVGPESAGAHPGPVCYRKGGYLTVTDANLLLGRLLPESFPKIFGPNEDESLDVESTRKEFEKLTAEINSGLEKERQMTADEVAFGFIKIANETMARPIRALTEAKGHDISIHRLTSFGGAGGQHCAAIAKSLGITQVLVHKYSSILSAYGMALADVVSEVQEPSSFTLDDSNTESIKKRFDSLKEEAKANLEEQGFTESQISYELFLNCRYQGTDSTLMISKPLESWDFKQSFFDKHKQEFGFIFENKDIIIDDIRIRASGKSFQSKEPSVDAQLKELKFEPVQKSLATCVKDIYFEGGRVPSEVYSLDNLPVGTIVNGPSLIVDKTQTIVVPPKAVARILHTHVVIDISHGNEYTANDSLAKASTIDPIYLSVFGSRFMAVAEQMGRALQKTSVSTNVKERLDYSCALFDAKGNLVANAPHMPVHLGSMSTCVRTQAKIHEGKLKPGDVLVTNHPSYGGTHLPDITTITPHFEGDEIMFYVAARAHHADIGGILPGSMPSSSKELSEEGATIKSEKLVVDGVFQEERMIDLLYNEPAKVEGGSGSRCLRDNLNDLKAQVSANQKGINLITSLIKEYGKNSVLRYMKAIQENAESAVRQLLLGVRERFLGEDLYAEDHMDDGSKICLRITIDEENGDAIFDFTGTTEEIYGNINAPEAVTYSAIIYCLRVLISENIPLNQGCLLPIKVIIPDNCFLKPSETAAVVGGNVLTSQRITDTILKAFQACAASQGDTNNLTFGIGGKDPETGEVKPGFGYYETICGGSGAIDGLDGTSGVHTHMTNTRITDLEVLERRYPVILRKFIIRENSGGAGKYKGGDGVIRDIEFRIPVTLSILSERRAYHPYGMKGGKDAECGKNIWIRKDILPSGEQRVRQINVGGKNTCHMQAGDHIVIMTPGGGGYGPPSERVDTVKKANGVQHFRANGTISQLQEIQHTN.

It belongs to the oxoprolinase family.

This is an uncharacterized protein from Schizosaccharomyces pombe (strain 972 / ATCC 24843) (Fission yeast).